The primary structure comprises 463 residues: ATP synthase subunit beta (463 aa).

An ATP-binding site is contributed by 152-159 (GGAGVGKT).

It belongs to the ATPase alpha/beta chains family. In terms of assembly, F-type ATPases have 2 components, CF(1) - the catalytic core - and CF(0) - the membrane proton channel. CF(1) has five subunits: alpha(3), beta(3), gamma(1), delta(1), epsilon(1). CF(0) has three main subunits: a(1), b(2) and c(9-12). The alpha and beta chains form an alternating ring which encloses part of the gamma chain. CF(1) is attached to CF(0) by a central stalk formed by the gamma and epsilon chains, while a peripheral stalk is formed by the delta and b chains.

It is found in the cell membrane. The catalysed reaction is ATP + H2O + 4 H(+)(in) = ADP + phosphate + 5 H(+)(out). Functionally, produces ATP from ADP in the presence of a proton gradient across the membrane. The catalytic sites are hosted primarily by the beta subunits. This is ATP synthase subunit beta from Clostridium botulinum (strain Eklund 17B / Type B).